A 559-amino-acid chain; its full sequence is U-box domain-containing protein 41 (559 aa).

2 disordered regions span residues 1-30 (MGGNKQRWFSFHQRSSSATTTTLPQHKHDE) and 121-156 (RMDKDPNPSPGQSPGPGDKDPEPEILPPVEENSPSD). Positions 12 to 24 (HQRSSSATTTTLP) are enriched in polar residues. Residues 30-104 (ETPPEFLCPI…FSWCDRQKVD (75 aa)) form the U-box domain. 5 ARM repeats span residues 266–305 (EDLRVSLCTDRILSFLRSLLVSRYNLVQTNAAASVVNLSL), 307–346 (KQNKVKIVRSGFVPLLIDVLKSGTTEAQEHVAGALFSLAL), 348–388 (DENK…HLSL), 390–427 (PSNRTRLVRAGAVPTLLSMVRSGDSTSRILLVLCNLAA), and 428–472 (CPDG…TLCQ).

The catalysed reaction is S-ubiquitinyl-[E2 ubiquitin-conjugating enzyme]-L-cysteine + [acceptor protein]-L-lysine = [E2 ubiquitin-conjugating enzyme]-L-cysteine + N(6)-ubiquitinyl-[acceptor protein]-L-lysine.. It functions in the pathway protein modification; protein ubiquitination. Its function is as follows. Functions as an E3 ubiquitin ligase. The sequence is that of U-box domain-containing protein 41 (PUB41) from Arabidopsis thaliana (Mouse-ear cress).